We begin with the raw amino-acid sequence, 469 residues long: MWKEKVQQYEDQIINDLKGLLAIESVRDDAKASEDAPVGPGPRKALDYMYEIAHRDGFTTHDVDHIAGRIEAGKGNDVLGILCHVDVVPAGDGWDSNPFEPVVTEDAIIARGTLDDKGPTIAAYYAIKILEDMNVDWKKRIHMIIGTDEESDWKCTDRYFKTEEMPTLGFAPDAEFPCIHGEKGITTFDLVQNKLAEDQDESDYELITFKSGERYNMVPDHAEARVLVKENMTDVIQDFEYFLEQNHLQGDSTVDSGILVLTVEGKAVHGMDPSIGVNAGLYLLKFLASLNLDNNAQAFVAFSNRYLFNSDFGEKMGMKFHTDVMGDVTTNIGVITYDNENAGLFGINLRYPEGFEFEKAMDRFANEIQQYGFEVKLGKVQPPHYVDKNDPFVQKLVTAYRNQTNDMTEPYTIGGGTYARNLDKGVAFGAMFSDSEDLMHQKNEYITKKQLFNATSIYLEAIYSLCVEE.

Position 84 (histidine 84) interacts with Zn(2+). Aspartate 86 is a catalytic residue. Residue aspartate 115 coordinates Zn(2+). Catalysis depends on glutamate 149, which acts as the Proton acceptor. The Zn(2+) site is built by glutamate 150, aspartate 173, and histidine 440.

It belongs to the peptidase M20A family. Zn(2+) is required as a cofactor.

The chain is Putative dipeptidase SAB1611c from Staphylococcus aureus (strain bovine RF122 / ET3-1).